A 425-amino-acid chain; its full sequence is Pleckstrin homology domain-containing family A member 2 (425 aa).

Residues 7 to 113 enclose the PH 1 domain; it reads QNRICGFLDI…WVEALNQASK (107 aa). Lys141 participates in a covalent cross-link: Glycyl lysine isopeptide (Lys-Gly) (interchain with G-Cter in SUMO2). Position 184 is a phosphoserine (Ser184). Residues 198–298 enclose the PH 2 domain; that stretch reads PLIKSGYCVK…WIKEIGAAVQ (101 aa). A compositionally biased stretch (low complexity) spans 312 to 330; the sequence is SISLTRPGSSSLSSGPNSI. The tract at residues 312–332 is disordered; that stretch reads SISLTRPGSSSLSSGPNSILC. A phosphoserine mark is found at Ser314 and Ser349. The segment at 352 to 425 is disordered; the sequence is SSWQPWTPVP…DDENIRTSDV (74 aa). Residues 400–410 show a composition bias toward basic and acidic residues; the sequence is RSEPQHPKEKP.

In terms of assembly, binds MPDZ and PTPN13. Highly expressed in heart, kidney, spleen and peripheral blood leukocytes. Detected at lower levels in brain, skeletal muscle, colon, thymus, liver, small intestine, placenta and lung.

The protein localises to the cytoplasm. It localises to the cell membrane. Its subcellular location is the nucleus. Its function is as follows. Binds specifically to phosphatidylinositol 3,4-diphosphate (PtdIns3,4P2), but not to other phosphoinositides. May recruit other proteins to the plasma membrane. The protein is Pleckstrin homology domain-containing family A member 2 (PLEKHA2) of Homo sapiens (Human).